The following is a 490-amino-acid chain: Cytochrome P450 90D2 (490 aa).

Residues 4 to 24 traverse the membrane as a helical segment; it reads AAAGWAAPAFAVAAVVIWVVL. Cys437 contributes to the heme binding site.

This sequence belongs to the cytochrome P450 family. Heme serves as cofactor. Expressed at low levels leaf blades, shoot apex and elongating stem.

It localises to the membrane. It catalyses the reaction 6-deoxoteasterone + reduced [NADPH--hemoprotein reductase] + O2 = 3-dehydro-6-deoxoteasterone + oxidized [NADPH--hemoprotein reductase] + 2 H2O + H(+). Its pathway is plant hormone biosynthesis; brassinosteroid biosynthesis. Catalyzes the C6-oxidation step in brassinosteroids biosynthesis. May convert 6-deoxoteasterone (6-deoxoTE) to 3-dehydro-6-deoxoteasterone (6-deoxo3DT, 6-deoxo3DHT), and teasterone (TE) to 3-dehydroteasterone (3DT, 3-DHT). Involved in the elongation of leaf sheaths and stems. This Oryza sativa subsp. japonica (Rice) protein is Cytochrome P450 90D2.